We begin with the raw amino-acid sequence, 229 residues long: Heptaprenylglyceryl phosphate synthase (229 aa).

Residue Lys-12 participates in sn-glycerol 1-phosphate binding. Residues Asp-14 and Ser-40 each contribute to the Mg(2+) site. Sn-glycerol 1-phosphate is bound by residues 159–164, Gly-189, and 209–210; these read YLEYSG and GN.

The protein belongs to the GGGP/HepGP synthase family. Group I subfamily. As to quaternary structure, homodimer. The cofactor is Mg(2+).

It catalyses the reaction sn-glycerol 1-phosphate + all-trans-heptaprenyl diphosphate = 3-heptaprenyl-sn-glycero-1-phosphate + diphosphate. It participates in membrane lipid metabolism; glycerophospholipid metabolism. Functionally, prenyltransferase that catalyzes in vivo the transfer of the heptaprenyl moiety of heptaprenyl pyrophosphate (HepPP; 35 carbon atoms) to the C3 hydroxyl of sn-glycerol-1-phosphate (G1P), producing heptaprenylglyceryl phosphate (HepGP). This reaction is an ether-bond-formation step in the biosynthesis of archaea-type G1P-based membrane lipids found in Bacillales. The protein is Heptaprenylglyceryl phosphate synthase of Bacillus anthracis (strain A0248).